Consider the following 368-residue polypeptide: Glucose 1-dehydrogenase 2 (368 aa).

A Zn(2+)-binding site is contributed by C41. Residue T43 participates in substrate binding. Zn(2+)-binding residues include H68 and E69. A substrate-binding site is contributed by N91. The Zn(2+) site is built by C95, C98, C101, C109, and Q152. Residues Q152 and D156 each contribute to the substrate site. NADP(+) is bound by residues 213-215 (NRR), 279-281 (FGF), 307-309 (LDN), and K356. Residue N309 participates in substrate binding.

It belongs to the zinc-containing alcohol dehydrogenase family. Glucose 1-dehydrogenase subfamily. It depends on Zn(2+) as a cofactor.

It carries out the reaction D-glucose + NAD(+) = D-glucono-1,5-lactone + NADH + H(+). The enzyme catalyses D-glucose + NADP(+) = D-glucono-1,5-lactone + NADPH + H(+). Functionally, catalyzes the NAD(P)(+)-dependent oxidation of D-glucose to D-gluconate via gluconolactone. Can utilize both NAD(+) and NADP(+) as electron acceptor. Is involved in the degradation of glucose through a non-phosphorylative variant of the Entner-Doudoroff pathway. This is Glucose 1-dehydrogenase 2 from Saccharolobus solfataricus (strain ATCC 35092 / DSM 1617 / JCM 11322 / P2) (Sulfolobus solfataricus).